A 420-amino-acid chain; its full sequence is Diphosphomevalonate decarboxylase 2 (420 aa).

25–28 (YWGK) is a (R)-5-diphosphomevalonate binding site. The Peroxisomal targeting signal PTS2 signature appears at 42–50 (SVTLDPDHL). (R)-5-diphosphomevalonate is bound by residues R80, 163-168 (SGSACR), and T219.

Belongs to the diphosphomevalonate decarboxylase family. As to quaternary structure, homodimer.

The protein localises to the peroxisome. It catalyses the reaction (R)-5-diphosphomevalonate + ATP = isopentenyl diphosphate + ADP + phosphate + CO2. Its pathway is isoprenoid biosynthesis; isopentenyl diphosphate biosynthesis via mevalonate pathway; isopentenyl diphosphate from (R)-mevalonate: step 3/3. In terms of biological role, performs the first committed step in the biosynthesis of isoprene-containing compounds such as sterols and terpenoids. Component of the triterpenes (e.g. ginsenosides or panaxosides) and phytosterols biosynthetic pathways. Promotes the accumulation of stigmasterol and beta-sitosterol. This Panax ginseng (Korean ginseng) protein is Diphosphomevalonate decarboxylase 2.